The primary structure comprises 476 residues: MLKVYNTLTRKEEEFKPLNEKEVKMYVCGPTVYDHTHLGHGRTYVSFDIIRRYLEHIGYTVNLVINFTDIDDKIIKRANENGKNPKELSEQFITVFLNDMTTLKVKPADIYPKVTEHIPEIIAFIEKLIEKGFAYETENGVYFEVKKFENYGKLSNINLEDLFSGVRIETSEEKKNPEDFALWKTAKPGEPKWKSPFVEGRPGWHIECSAMSSKYLGEQFDIHGGGRDLSFPHHENEIAQSVAYSGKDWVNYWLHTGFVMVNGEKMSKSLGNFVTIEGISKEYDPEILRFFFIQRHYRSPIDYTAESITHVKNNLEKIYNVIENIRISLEKSEKSRVWGENEVLLYDILKNSKRNFYEAMNSDFNTVEALKSVFEVSNGVNKYLSLVKTPSEGLLLKAFDFFKIVGEIFGLFENYFKTSSESDDEEFIKFLIELRSDLRLQKNYEMSDKIRDGLKNLGYQIEDNPKEGTVFKKINI.

Cysteine 28 is a Zn(2+) binding site. A 'HIGH' region motif is present at residues 30 to 40; the sequence is PTVYDHTHLGH. Cysteine 208, histidine 233, and glutamate 237 together coordinate Zn(2+). A 'KMSKS' region motif is present at residues 265–269; the sequence is KMSKS. Lysine 268 contacts ATP.

It belongs to the class-I aminoacyl-tRNA synthetase family. It depends on Zn(2+) as a cofactor.

Its subcellular location is the cytoplasm. The enzyme catalyses tRNA(Cys) + L-cysteine + ATP = L-cysteinyl-tRNA(Cys) + AMP + diphosphate. This is Cysteine--tRNA ligase from Methanococcus maripaludis (strain C6 / ATCC BAA-1332).